The chain runs to 80 residues: Large ribosomal subunit protein uL29 (80 aa).

It belongs to the universal ribosomal protein uL29 family.

This is Large ribosomal subunit protein uL29 from Saccharopolyspora erythraea (strain ATCC 11635 / DSM 40517 / JCM 4748 / NBRC 13426 / NCIMB 8594 / NRRL 2338).